The chain runs to 572 residues: Proline--tRNA ligase (572 aa).

The protein belongs to the class-II aminoacyl-tRNA synthetase family. ProS type 1 subfamily. As to quaternary structure, homodimer.

The protein localises to the cytoplasm. It catalyses the reaction tRNA(Pro) + L-proline + ATP = L-prolyl-tRNA(Pro) + AMP + diphosphate. Functionally, catalyzes the attachment of proline to tRNA(Pro) in a two-step reaction: proline is first activated by ATP to form Pro-AMP and then transferred to the acceptor end of tRNA(Pro). As ProRS can inadvertently accommodate and process non-cognate amino acids such as alanine and cysteine, to avoid such errors it has two additional distinct editing activities against alanine. One activity is designated as 'pretransfer' editing and involves the tRNA(Pro)-independent hydrolysis of activated Ala-AMP. The other activity is designated 'posttransfer' editing and involves deacylation of mischarged Ala-tRNA(Pro). The misacylated Cys-tRNA(Pro) is not edited by ProRS. The chain is Proline--tRNA ligase from Escherichia coli O127:H6 (strain E2348/69 / EPEC).